The primary structure comprises 431 residues: Fumarylacetoacetase fahA (431 aa).

Aspartate 133 lines the Ca(2+) pocket. Tyrosine 135 is a binding site for substrate. Residue histidine 140 is the Proton acceptor of the active site. Residue arginine 149 participates in substrate binding. Residues glutamate 209, glutamate 211, and aspartate 243 each coordinate Ca(2+). Mg(2+) is bound at residue aspartate 243. 2 residues coordinate substrate: glutamine 250 and tyrosine 254. 2 residues coordinate Mg(2+): lysine 263 and threonine 267. Residue threonine 362 coordinates substrate. The segment covering 362 to 381 (TISGKENQTQGSLLEQTNGK) has biased composition (polar residues). The segment at 362–382 (TISGKENQTQGSLLEQTNGKN) is disordered.

This sequence belongs to the FAH family. The cofactor is Ca(2+). It depends on Mg(2+) as a cofactor.

The catalysed reaction is 4-fumarylacetoacetate + H2O = acetoacetate + fumarate + H(+). It participates in amino-acid degradation; L-phenylalanine degradation; acetoacetate and fumarate from L-phenylalanine: step 6/6. Fumarylacetoacetase; part of the L-tyrosine degradation gene cluster that mediates the biosynthesis of the brownish pigment pyomelanin as an alternative melanin. The 4-hydroxyphenylpyruvate dioxygenase hppD catalyzes the conversion of 4-hydroxyphenylpyruvate to homogentisic acid (HGA). The protein hmgX is crucial for this conversion and thus, probably functions as an accessory factor to mediate specific activity of hppD. The homogentisate 1,2-dioxygenase hmgA is then involved in the cleavage of the aromatic ring of HGA and its conversion to 4-maleylacetoacetate. When hmgA activity is lowered by the cell wall integrity (CWI) signaling pathway, HGA accumulates and leads to the production of pyomelanin through benzoquinone acetic acid after oxidation and polymerization. On the opposite, in non-stress conditions, both hppD and hmgA activities are balanced and HGA is degraded into 4-maleylacetoacetate. 4-maleylacetoacetate is further converted to 4-fumarylacetoacetate by the maleylacetoacetate isomerase maiA, which is degraded into fumarate and acetoacetate by the fumarylacetoacetase fahA. The polypeptide is Fumarylacetoacetase fahA (Aspergillus fumigatus (strain ATCC MYA-4609 / CBS 101355 / FGSC A1100 / Af293) (Neosartorya fumigata)).